Reading from the N-terminus, the 569-residue chain is MAYTLDRGSYAAMFGPTVGDRVRLADTELIIEVEQDYTTYGEEVKFGGGKVIRDGMGQSQHSRQEGAVDTVITNALIVDHWGIVKADVGIKDGRICAIGKAGNPDVQPNVDIIIGPGTEAIAGEGRILTAGGIDAHIHWICPQQIEDALHSGITTMLGGGTGPAEGTNATTCTPGPWHIARMLQAAEGLPMNMGFFGKGNASRPQGLEEQLRAGACGLKLHEDWGTTPSAIDVCLSVAEKWDVQVAIHTDTLNESGFVENTTAAFKGRTIHAFHTEGAGGGHAPDIIKLCGEANVLPSSTNPTRPFTRNTLDEHLDMLMVCHHLDSRIPEDVAFAESRIRRETIAAEDILHDLGAFSMIASDSQAMGRVGEVIIRTWQTADKMKRQRGALPEERGQNDNQRVKRYIAKYTINPAITHGIAHYVGSVAVGKLADLVLWKPMFFGVKPDLVLKCGTIASAAMGDPNASIPTPQPVHYRPMFGAFGGALTHSAVNFVSQAGLDGEIAQQFGLRKTLLPVVGCRTIGKADMVHNSATPHMEVDPETYEVRADGRLLTCEPATVLPLAQRYFLF.

The 439-residue stretch at 131 to 569 folds into the Urease domain; the sequence is GGIDAHIHWI…LPLAQRYFLF (439 aa). Ni(2+)-binding residues include H136, H138, and K219. K219 carries the post-translational modification N6-carboxylysine. H221 lines the substrate pocket. Residues H248 and H274 each contribute to the Ni(2+) site. H322 functions as the Proton donor in the catalytic mechanism. D362 contacts Ni(2+).

Belongs to the metallo-dependent hydrolases superfamily. Urease alpha subunit family. Heterotrimer of UreA (gamma), UreB (beta) and UreC (alpha) subunits. Three heterotrimers associate to form the active enzyme. The cofactor is Ni cation. Carboxylation allows a single lysine to coordinate two nickel ions.

It is found in the cytoplasm. It carries out the reaction urea + 2 H2O + H(+) = hydrogencarbonate + 2 NH4(+). It functions in the pathway nitrogen metabolism; urea degradation; CO(2) and NH(3) from urea (urease route): step 1/1. This chain is Urease subunit alpha, found in Magnetococcus marinus (strain ATCC BAA-1437 / JCM 17883 / MC-1).